An 89-amino-acid chain; its full sequence is uncharacterized protein (89 aa).

The chain crosses the membrane as a helical span at residues 20–39; it reads SFAMTTYLNLFVKLLIFLYI.

It localises to the membrane. This is an uncharacterized protein from Escherichia coli (strain K12).